Consider the following 335-residue polypeptide: Aliphatic sulfonates import ATP-binding protein SsuB (335 aa).

In terms of domain architecture, ABC transporter spans 74–293 (VRLTRVSKRY…ARASAAFAAL (220 aa)). Residue 106–113 (GRSGCGKS) coordinates ATP. The tract at residues 308 to 335 (APAAPNAAGPEGASRGRAAPASGLRWAV) is disordered.

It belongs to the ABC transporter superfamily. Aliphatic sulfonates importer (TC 3.A.1.17.2) family. As to quaternary structure, the complex is composed of two ATP-binding proteins (SsuB), two transmembrane proteins (SsuC) and a solute-binding protein (SsuA).

It is found in the cell inner membrane. The enzyme catalyses ATP + H2O + aliphatic sulfonate-[sulfonate-binding protein]Side 1 = ADP + phosphate + aliphatic sulfonateSide 2 + [sulfonate-binding protein]Side 1.. Part of the ABC transporter complex SsuABC involved in aliphatic sulfonates import. Responsible for energy coupling to the transport system. The protein is Aliphatic sulfonates import ATP-binding protein SsuB of Burkholderia mallei (strain ATCC 23344).